The following is a 439-amino-acid chain: Protein translocase subunit SecY (439 aa).

10 helical membrane passes run 28–48, 73–93, 127–147, 156–176, 179–199, 220–240, 276–296, 318–338, 375–395, and 401–421; these read ILIT…PVPG, IFSG…LPYI, LTRY…AVWV, PLFT…VMWI, LITE…NIVA, VGGI…IVFV, GVMP…LANF, IYAL…SSLI, LTIL…AVEG, and TFQG…IDTA.

This sequence belongs to the SecY/SEC61-alpha family. Component of the Sec protein translocase complex. Heterotrimer consisting of SecY, SecE and SecG subunits. The heterotrimers can form oligomers, although 1 heterotrimer is thought to be able to translocate proteins. Interacts with the ribosome. Interacts with SecDF, and other proteins may be involved. Interacts with SecA.

It localises to the cell inner membrane. The protein resides in the cellular thylakoid membrane. The central subunit of the protein translocation channel SecYEG. Consists of two halves formed by TMs 1-5 and 6-10. These two domains form a lateral gate at the front which open onto the bilayer between TMs 2 and 7, and are clamped together by SecE at the back. The channel is closed by both a pore ring composed of hydrophobic SecY resides and a short helix (helix 2A) on the extracellular side of the membrane which forms a plug. The plug probably moves laterally to allow the channel to open. The ring and the pore may move independently. This Synechococcus elongatus (strain ATCC 33912 / PCC 7942 / FACHB-805) (Anacystis nidulans R2) protein is Protein translocase subunit SecY.